The sequence spans 375 residues: Platelet-derived growth factor receptor-like protein (375 aa).

Positions 1–17 (MKVWLLLGLLLLHEALG) are cleaved as a signal peptide. The segment at 19 to 63 (VAGQHPPKNKRPKEQGENRIKPTNKKAKPKIPKIKDRDTADSAPK) is disordered. A compositionally biased stretch (basic residues) spans 40 to 50 (PTNKKAKPKIP). The region spanning 62–159 (PKSQSIMMQA…GYICRRDEAR (98 aa)) is the Ig-like C2-type 1 domain. Cys96 and Cys143 are joined by a disulfide. Asn219 is a glycosylation site (N-linked (GlcNAc...) asparagine). The region spanning 272 to 375 (PSTTILASSN…TTVATTVEFS (104 aa)) is the Ig-like C2-type 2 domain. Cys293 and Cys357 form a disulfide bridge.

In terms of assembly, forms a complex composed of PDGFRL, TNK2 and GRB2.

Its subcellular location is the secreted. The protein is Platelet-derived growth factor receptor-like protein (Pdgfrl) of Rattus norvegicus (Rat).